The chain runs to 325 residues: Dimethylallyltranstransferase (325 aa).

Isopentenyl diphosphate-binding residues include R54 and H84. Mg(2+)-binding residues include D91 and D95. Positions 91–95 match the DDXXD motif motif; the sequence is DRVVD. An isopentenyl diphosphate-binding site is contributed by R101. The DDXXD motif motif lies at 217-221; that stretch reads RDIIA.

It belongs to the FPP/GGPP synthase family. Mg(2+) is required as a cofactor.

It catalyses the reaction isopentenyl diphosphate + dimethylallyl diphosphate = (2E)-geranyl diphosphate + diphosphate. Its pathway is isoprenoid biosynthesis; geranyl diphosphate biosynthesis; geranyl diphosphate from dimethylallyl diphosphate and isopentenyl diphosphate: step 1/1. Functionally, catalyzes the addition of isopentenyl diphosphate (IPP) onto dimethylallyl diphosphate (DMAPP) to form geranyl pyrophosphate (GPP). Is probably involved in the biosynthesis of decaprenyl diphosphate, which is required for mycobacterial cell wall synthesis. Could be required for host endothelial-cell invasion and/or intracellular survival. The sequence is that of Dimethylallyltranstransferase from Mycobacterium tuberculosis (strain ATCC 25618 / H37Rv).